Consider the following 123-residue polypeptide: Cliotide T12 (123 aa).

Positions Met-1–Ala-28 are cleaved as a signal peptide. A cross-link (cyclopeptide (Gly-Asp)) is located at residues Gly-29–Asp-58. 3 disulfide bridges follow: Cys-32/Cys-48, Cys-36/Cys-50, and Cys-41/Cys-55. Residues His-59–Asn-123 constitute a propeptide, removed in mature form.

Contains 3 disulfide bonds. Post-translationally, this is a cyclic peptide.

Its function is as follows. Probably participates in a plant defense mechanism. This is Cliotide T12 from Clitoria ternatea (Butterfly pea).